A 532-amino-acid polypeptide reads, in one-letter code: T-complex protein 1 subunit epsilon (532 aa).

This sequence belongs to the TCP-1 chaperonin family. In terms of assembly, component of the T-complex protein 1 (TCP1) complex.

Its subcellular location is the cytoplasm. Molecular chaperone; assists the folding of proteins upon ATP hydrolysis. This Encephalitozoon cuniculi (strain GB-M1) (Microsporidian parasite) protein is T-complex protein 1 subunit epsilon (CCT5).